The chain runs to 468 residues: Putative magnesium transporter MRS2-G (468 aa).

Disordered regions lie at residues 1 to 76 (MGRR…AGKV) and 183 to 204 (GQPGGDDHGEKHDDSHGDQVPR). Composition is skewed to low complexity over residues 14-23 (ASNASTSSST) and 31-45 (RLPSLTRPRASSSPS). Positions 46 to 67 (PASPSPPPPSASHPAPPSPPLA) are enriched in pro residues. Residues 187-201 (GDDHGEKHDDSHGDQ) are compositionally biased toward basic and acidic residues. A run of 2 helical transmembrane segments spans residues 402-422 (LTLTIASFGIAVNTFIAGAFA) and 437-457 (FFWPFVGGTSSGCFMICIVLL).

Belongs to the CorA metal ion transporter (MIT) (TC 1.A.35.5) family. As to quaternary structure, interacts with CYCB2-2.

The protein resides in the membrane. Functionally, putative magnesium transporter. This Oryza sativa subsp. japonica (Rice) protein is Putative magnesium transporter MRS2-G (MRS2-G).